A 455-amino-acid chain; its full sequence is DNA repair protein RadA (455 aa).

The segment at cysteine 11 to cysteine 28 adopts a C4-type zinc-finger fold. Glycine 97–serine 104 contributes to the ATP binding site. The short motif at lysine 250–glycine 254 is the RadA KNRFG motif element. Residues aspartate 350–alanine 455 form a lon-protease-like region.

The protein belongs to the RecA family. RadA subfamily.

Functionally, DNA-dependent ATPase involved in processing of recombination intermediates, plays a role in repairing DNA breaks. Stimulates the branch migration of RecA-mediated strand transfer reactions, allowing the 3' invading strand to extend heteroduplex DNA faster. Binds ssDNA in the presence of ADP but not other nucleotides, has ATPase activity that is stimulated by ssDNA and various branched DNA structures, but inhibited by SSB. Does not have RecA's homology-searching function. The polypeptide is DNA repair protein RadA (Treponema pallidum (strain Nichols)).